A 158-amino-acid polypeptide reads, in one-letter code: MQRYPMTPEGKIALEKELQHLKTVERPRITQAIAEAREHGDLKENAEYHAAREQQGFCEGRIQDIEGKLGTAQVIAVKDLEQNGRVVFGVTVTIENLDTEERNTYKIVGDDEADFKINKISVNSPIALGLLGKKEGDEVKITTPQGEVEYEVVSVEYL.

This sequence belongs to the GreA/GreB family.

In terms of biological role, necessary for efficient RNA polymerase transcription elongation past template-encoded arresting sites. The arresting sites in DNA have the property of trapping a certain fraction of elongating RNA polymerases that pass through, resulting in locked ternary complexes. Cleavage of the nascent transcript by cleavage factors such as GreA or GreB allows the resumption of elongation from the new 3'terminus. GreA releases sequences of 2 to 3 nucleotides. In Acinetobacter baumannii (strain SDF), this protein is Transcription elongation factor GreA.